Here is a 258-residue protein sequence, read N- to C-terminus: Hydroxypyruvate isomerase (258 aa).

Active-site proton donor/acceptor residues include E143 and E240.

Belongs to the hyi family. Homodimer.

The enzyme catalyses 3-hydroxypyruvate = 2-hydroxy-3-oxopropanoate. Its activity is regulated as follows. Not stimulated by addition of pyridoxal 5'-phosphate (0.1 mM), FAD, NAD(+), NADP(+) or ATP (1 mM each). EDTA (10 mM) and metal ions (1 mM) such as Ca(2+), Co(2+), Mg(2+), Ni(2+), Zn(2+) do not affect the enzyme activity. Functionally, catalyzes the reversible isomerization between hydroxypyruvate and 2-hydroxy-3-oxopropanoate (also termed tartronate semialdehyde). Does not catalyze the isomerization of D-fructose to D-glucose or that of D-xylulose to D-xylose. Also does not catalyze racemization of serine, alanine, glycerate or lactate. The sequence is that of Hydroxypyruvate isomerase (hyi) from Escherichia coli (strain K12).